The chain runs to 143 residues: Large ribosomal subunit protein uL11 (143 aa).

Belongs to the universal ribosomal protein uL11 family. In terms of assembly, part of the ribosomal stalk of the 50S ribosomal subunit. Interacts with L10 and the large rRNA to form the base of the stalk. L10 forms an elongated spine to which L12 dimers bind in a sequential fashion forming a multimeric L10(L12)X complex. Post-translationally, one or more lysine residues are methylated.

Its function is as follows. Forms part of the ribosomal stalk which helps the ribosome interact with GTP-bound translation factors. This Kocuria rhizophila (strain ATCC 9341 / DSM 348 / NBRC 103217 / DC2201) protein is Large ribosomal subunit protein uL11.